A 390-amino-acid polypeptide reads, in one-letter code: uncharacterized protein (390 aa).

Positions 215-325 (SRFKRKTLGK…KLIKDCEMVE (111 aa)) constitute a Glutaredoxin domain.

This is an uncharacterized protein from Arabidopsis thaliana (Mouse-ear cress).